The sequence spans 462 residues: TNF receptor-associated factor family protein DDB_G0267754 (462 aa).

An RING-type; degenerate zinc finger spans residues 24–62; that stretch reads CCVCECLLIEALQCRNGHVACKNCFIKIVKSKKECMTCR. Positions 104 to 127 are disordered; sequence KNGNGNEGSSANEIEQPQQPQQQQ. 2 TRAF-type zinc fingers span residues 150–217 and 214–273; these read SHLK…SHTE and SHTE…NQLA. One can recognise an MATH domain in the interval 326–449; sequence MFRGKWVISN…NDTLTINFSI (124 aa).

It belongs to the TNF receptor-associated factor family. A subfamily.

Its subcellular location is the cytoplasm. Functionally, probable adapter protein and signal transducer that links members of the tumor necrosis factor receptor family to different signaling pathways by association with the receptor cytoplasmic domain and kinases. The protein is TNF receptor-associated factor family protein DDB_G0267754 of Dictyostelium discoideum (Social amoeba).